We begin with the raw amino-acid sequence, 2094 residues long: Nuclear mitotic apparatus protein 1 (2094 aa).

The head (Globular) stretch occupies residues 1–210 (MTLHATRAAT…SPMGDILQTP (210 aa)). The residue at position 160 (S160) is a Phosphoserine. T161 bears the Phosphothreonine mark. S167 and S201 each carry phosphoserine. A Phosphothreonine modification is found at T209. Residues 211 to 1681 (QFQMRRLKKQ…ADQQLRDLGK (1471 aa)) are a coiled coil. The residue at position 269 (S269) is a Phosphoserine. The residue at position 377 (K377) is an N6-acetyllysine. Phosphoserine occurs at positions 386 and 398. An N6-acetyllysine modification is found at K443. Disordered stretches follow at residues 617 to 636 (QLQAANDARDNAQTSVTQAQ) and 723 to 759 (LKEQQCRATEMEAESRSLMEQREREQKELEQEKAGRK). The span at 627–636 (NAQTSVTQAQ) shows a compositional bias: polar residues. K878 carries the post-translational modification N6-acetyllysine. Disordered regions lie at residues 921–1000 (SLEL…TQER), 1081–1143 (LVKK…EGLT), and 1173–1223 (ELGH…SSLI). Residues 935–951 (ASDQLGEQQGRPFSSTH) are compositionally biased toward polar residues. Composition is skewed to basic and acidic residues over residues 956–972 (AMEREAEQMGGELERLR) and 983–998 (QEERGQQEREVARLTQ). S1183 carries the post-translational modification Phosphoserine. Residues 1194 to 1206 (KAQDHSKAEEEWK) are compositionally biased toward basic and acidic residues. A Phosphoserine modification is found at S1221. Position 1507 is an N6-acetyllysine (K1507). Position 1583 is a phosphoserine (S1583). A Glycyl lysine isopeptide (Lys-Gly) (interchain with G-Cter in SUMO2) cross-link involves residue K1681. The segment at 1681 to 1858 (KFQVATDALK…NSALLSLPGY (178 aa)) is membrane-binding domain 1. The interval 1682-2094 (FQVATDALKS…TPRAKGKVKH (413 aa)) is tail (Globular). Phosphoserine occurs at positions 1703, 1706, and 1710. Residues 1718–1743 (SVASKLPRTQPDGTSVPGEPASPISQ) form a disordered region. The Tankyrase-binding domain motif lies at 1724-1730 (PRTQPDG). A phosphoserine mark is found at S1739 and S1742. A Glycyl lysine isopeptide (Lys-Gly) (interchain with G-Cter in SUMO1); alternate cross-link involves residue K1748. K1748 participates in a covalent cross-link: Glycyl lysine isopeptide (Lys-Gly) (interchain with G-Cter in SUMO2); alternate. The residue at position 1751 (S1751) is a Phosphoserine. S1754 is subject to Phosphoserine; by PLK1. Y1756 carries the post-translational modification Phosphotyrosine. Residue T1758 is modified to Phosphothreonine. The interval 1760-1795 (TPARGQAPLETSLDSLGDAFPDSGRKTRSARRRTTQ) is disordered. The interval 1770–1792 (TSLDSLGDAFPDSGRKTRSARRR) is 4.1-binding domain. Phosphoserine; by PLK1 is present on S1771. Phosphoserine occurs at positions 1774 and 1782. Position 1786 is a phosphothreonine (T1786). A Glycyl lysine isopeptide (Lys-Gly) (interchain with G-Cter in SUMO2) cross-link involves residue K1804. 2 disordered regions span residues 1807–1883 (LEEP…GRNS) and 1937–2094 (EMKT…KVKH). A phosphoserine mark is found at S1812 and S1815. Polar residues predominate over residues 1812-1839 (SANSSFYSTQSAPASQANLRATSSTQSL). At S1816 the chain carries Phosphoserine; by PLK1. Y1818 is subject to Phosphotyrosine. S1822 bears the Phosphoserine mark. Position 1826 is a phosphoserine; alternate (S1826). S1826 is a glycosylation site (O-linked (GlcNAc) serine; alternate). Residues S1844 and S1869 each carry the phosphoserine modification. Positions 1864 to 1967 (SSARRSQARM…AEGVGITTRQ (104 aa)) are tubulin-binding domain. The interval 1874-1908 (SSGAPQGRNSFYMGTCQDEPEQLDDWNRIAELQQR) is GPSM2-binding domain. The segment covering 1937-1948 (EMKTGDPRETLR) has biased composition (basic and acidic residues). Phosphoserine is present on S1951. The tract at residues 1963–2042 (ITTRQQRKRV…SILNTPKKLG (80 aa)) is membrane-binding domain 2. Residues 1966–1971 (RQQRKR) carry the Nuclear localization signal motif. A phosphoserine mark is found at S1973 and S1974. T1982 carries the phosphothreonine modification. S1985 is modified (phosphoserine). The residue at position 1997 (T1997) is a Phosphothreonine; by CDK1. Residues 1997–2006 (TPRDRHEGRK) show a composition bias toward basic and acidic residues. S2029 is modified (phosphoserine). Position 2037 is a phosphothreonine (T2037). Phosphoserine is present on residues S2044 and S2059. S2069 carries the post-translational modification Phosphoserine; by CDK1. The span at 2073-2085 (ATTTTGTATVATT) shows a compositional bias: low complexity. At T2085 the chain carries Phosphothreonine; by CDK1.

In terms of assembly, homodimer. Also forms multiarm oligomers by association of C-terminal tail domains, oligomers may further assemble to form a hexagonal nuclear lattice-like network. Associates with the dynein-dynactin complex; this association promotes the transport and accumulation of NUMA1 at the mitotic spindle poles that is inhibited by the BRISC complex in a PLK1-dependent manner. Part of a spindle orientation complex at least composed of GNAI1, GPSM2 and NUMA1. Interacts (via C-terminus) with microtubules (MTs); this interaction is direct and promotes both MT bundle formation and stability in a dynein-dynactin complex- and CDK1-independent manner. Interacts with EPB41 and EPB41L2; these interactions are negatively regulated by CDK1 during metaphase and are important for anaphase-specific localization of NUMA1 in symmetrically dividing cells. Interacts (via C-terminus) with GPSM2 (via TPR repeats); this interaction is direct, prevented by competitive binding of INSC, is inhibited in a PLK1-dependent manner, blocks the association of NUMA1 with MTs and inhibits NUMA1-induced MT bundle formation, prevents the association of NUMA1 with SPAG5, induces mitotic spindle pole localization of GPSM2, both metaphase cell cortex localization of NUMA1 and mitotic spindle organization. Does not interact with GPSM2 during anaphase. Interacts (via C-terminus) with the nuclear importin alpha/importin beta receptor; this interaction is inhibited by RanGTP. Interacts (via C-terminus) with KPNB1; this interaction is inhibited by RanGTP and the BRISC complex. Interacts with ABRAXAS2 and the BRISC complex; these interactions regulate mitotic spindle assembly. Interacts (via N-terminal end of the coiled-coil domain) with RAE1; this interaction promotes mitotic spindle formation. Interacts (via C-terminus) with SPAG5 (via C-terminus); this interaction promotes the recruitment of SPAG5 to the MTs at spindle poles in a dynein-dynactin-dependent manner and regulates mitotic spindle organization and proper chromosome alignment during mitosis. Interacts with TNKS; this interaction occurs at the onset of mitosis. Interacts with TNKS2. Interacts with tubulin. Interacts with KHDC3 (via C-terminus). Post-translationally, phosphorylation and dephosphorylation on Thr-2037 regulates the extent of cortical NUMA1 and the dynein-dynactin complex localization during mitotic metaphase and anaphase. In metaphase, phosphorylation on Thr-2037 occurs in a kinase CDK1-dependent manner; this phosphorylation maintains low levels of cortical dynein-dynactin complex at metaphase, and hence proper spindle positioning. In anaphase, dephosphorylated on Thr-2037 by phosphatase PPP2CA; this dephosphorylation stimulates its membrane association and with the dynein-dynactin complex its enrichment at the cell cortex, and hence robust spindle elongation. Probably also phosphorylated on Thr-1997 and Ser-2069 by CDK1; these phosphorylations may regulate its cell cortex recruitment during metaphase and anaphase. Phosphorylated on Ser-1751, Ser-1754, Ser-1771 and Ser-1816 by PLK1; these phosphorylations induce cortical dynein-dynactin complex dissociation from the NUMA1-GPSM2 complex and negatively regulates cortical dynein-dynactin complex localization. In terms of processing, ADP-ribosylated by TNKS at the onset of mitosis; ADP-ribosylation is not required for its localization to spindle poles. O-glycosylated during cytokinesis at sites identical or close to phosphorylation sites, this interferes with the phosphorylation status. Post-translationally, ubiquitinated with 'Lys-63'-linked polyubiquitin chains. Deubiquitination by the BRISC complex is important for the incorporation of NUMA1 into mitotic spindle poles and normal spindle pole function, probably by modulating interactions between NUMA1, dynein-dynactin complex and importin-beta. In terms of tissue distribution, expressed in testis, speen, liver, lung, spinal cord and brain. Expressed in Purkinje neurons (at protein level).

It localises to the nucleus. Its subcellular location is the nucleoplasm. The protein localises to the nucleus matrix. It is found in the chromosome. The protein resides in the cytoplasm. It localises to the cytoskeleton. Its subcellular location is the microtubule organizing center. The protein localises to the centrosome. It is found in the spindle pole. The protein resides in the cell cortex. It localises to the cell membrane. Its subcellular location is the lateral cell membrane. Microtubule (MT)-binding protein that plays a role in the formation and maintenance of the spindle poles and the alignement and the segregation of chromosomes during mitotic cell division. Functions to tether the minus ends of MTs at the spindle poles, which is critical for the establishment and maintenance of the spindle poles. Plays a role in the establishment of the mitotic spindle orientation during metaphase and elongation during anaphase in a dynein-dynactin-dependent manner. In metaphase, part of a ternary complex composed of GPSM2 and G(i) alpha proteins, that regulates the recruitment and anchorage of the dynein-dynactin complex in the mitotic cell cortex regions situated above the two spindle poles, and hence regulates the correct oritentation of the mitotic spindle. During anaphase, mediates the recruitment and accumulation of the dynein-dynactin complex at the cell membrane of the polar cortical region through direct association with phosphatidylinositol 4,5-bisphosphate (PI(4,5)P2), and hence participates in the regulation of the spindle elongation and chromosome segregation. Also binds to other polyanionic phosphoinositides, such as phosphatidylinositol 3-phosphate (PIP), lysophosphatidic acid (LPA) and phosphatidylinositol triphosphate (PIP3), in vitro. Also required for proper orientation of the mitotic spindle during asymmetric cell divisions. Plays a role in mitotic MT aster assembly. Involved in anastral spindle assembly. Positively regulates TNKS protein localization to spindle poles in mitosis. Highly abundant component of the nuclear matrix where it may serve a non-mitotic structural role, occupies the majority of the nuclear volume. Required for epidermal differentiation and hair follicle morphogenesis. This is Nuclear mitotic apparatus protein 1 from Mus musculus (Mouse).